The sequence spans 505 residues: Lysine--tRNA ligase (505 aa).

Residues glutamate 415 and glutamate 422 each coordinate Mg(2+).

The protein belongs to the class-II aminoacyl-tRNA synthetase family. As to quaternary structure, homodimer. It depends on Mg(2+) as a cofactor.

The protein localises to the cytoplasm. It catalyses the reaction tRNA(Lys) + L-lysine + ATP = L-lysyl-tRNA(Lys) + AMP + diphosphate. The chain is Lysine--tRNA ligase from Xanthomonas campestris pv. campestris (strain 8004).